The following is a 604-amino-acid chain: Linalool synthase Tps-5042L13, chloroplastic (604 aa).

A chloroplast-targeting transit peptide spans 1–34 (MSSMRIYVAIMKKPSVKHVDNVDKKASKPSWRVS). (2E)-geranyl diphosphate contacts are provided by Arg323, Asp360, Asp364, Arg501, and Asp504. Asp360 and Asp364 together coordinate Mg(2+). Positions 360-364 (DDVYD) match the DDXXD motif motif. Residues Asp504, Thr508, and Glu512 each coordinate Mg(2+).

It belongs to the terpene synthase family. Tpsb subfamily. As to quaternary structure, monomer. Requires Mg(2+) as cofactor. Mn(2+) serves as cofactor.

It is found in the plastid. It localises to the chloroplast. It carries out the reaction (2E)-geranyl diphosphate + H2O = linalool + diphosphate. It participates in secondary metabolite biosynthesis; terpenoid biosynthesis. Monoterpene synthase (mono-TPS) involved in the biosynthesis of monoterpenes natural products. Catalyzes the conversion of (2E)-geranyl diphosphate (GPP) into linalool. In Perilla frutescens (Beefsteak mint), this protein is Linalool synthase Tps-5042L13, chloroplastic.